Consider the following 262-residue polypeptide: LOB domain-containing protein 18 (262 aa).

One can recognise an LOB domain in the interval 36-138; that stretch reads GPCGACKFLR…AEVSYLQAHL (103 aa). Residues 223–262 form a disordered region; sequence VGLGGENSHDLQALAHELLHRQGSPPPAATDHSPSRTMSR.

It belongs to the LOB domain-containing protein family. As to quaternary structure, homodimer and heterodimer with LBD16. Interacts with GIP1. Expressed in roots, stems, leaves and flowers. Expressed in vascular tissues of hypocotyls, leaves, roots, developing floral organs and siliques.

It is found in the nucleus. Its function is as follows. Involved in the positive regulation of tracheary element (TE) differentiation. Involved in a positive feedback loop that maintains or promotes NAC030/VND7 expression that regulates TE differentiation-related genes. Functions in the initiation and emergence of lateral roots, in conjunction with LBD16, downstream of ARF7 and ARF19. Transcriptional activator that directly regulates EXPA14, a gene encoding a cell wall-loosening factor that promotes lateral root emergence. Activates EXPA14 by directly binding to a specific region of its promoter. Transcriptional activator that directly regulates EXPA17, a gene encoding a cell wall-loosening factor that promotes lateral root emergence. Acts downstream of the auxin influx carriers AUX1 and LAX1 in the regulation of lateral root initiation and development. The protein is LOB domain-containing protein 18 (LBD18) of Arabidopsis thaliana (Mouse-ear cress).